We begin with the raw amino-acid sequence, 318 residues long: Isoflavone reductase (318 aa).

NADP(+)-binding positions include 11-17, Arg-36, and Lys-44; that span reads GPTGAIG. Lys-144 acts as the Proton acceptor in catalysis. Arg-148 is a binding site for NADP(+).

Belongs to the NmrA-type oxidoreductase family. Isoflavone reductase subfamily.

The catalysed reaction is (3R)-vestitone + NADP(+) = 2'-hydroxyformononetin + NADPH + 2 H(+). It functions in the pathway phytoalexin biosynthesis; pterocarpan phytoalexin biosynthesis. Reduces achiral isoflavones to chiral isoflavanones during the biosynthesis of chiral pterocarpan phytoalexins. The reduction product is a third isomer, which represents the penultimate intermediate in the synthesis of the phytoalexin (-)-medicarpin, the major phytoalexin in Alfalfa. This Medicago sativa (Alfalfa) protein is Isoflavone reductase.